The following is a 301-amino-acid chain: ATP synthase gamma chain (301 aa).

It belongs to the ATPase gamma chain family. F-type ATPases have 2 components, CF(1) - the catalytic core - and CF(0) - the membrane proton channel. CF(1) has five subunits: alpha(3), beta(3), gamma(1), delta(1), epsilon(1). CF(0) has three main subunits: a, b and c.

The protein resides in the cell inner membrane. Its function is as follows. Produces ATP from ADP in the presence of a proton gradient across the membrane. The gamma chain is believed to be important in regulating ATPase activity and the flow of protons through the CF(0) complex. The sequence is that of ATP synthase gamma chain from Helicobacter pylori (strain J99 / ATCC 700824) (Campylobacter pylori J99).